The chain runs to 154 residues: Periplasmic nitrate reductase, electron transfer subunit (154 aa).

A signal peptide spans 1-24; the sequence is MSMHPALRLLATVLVALGAGPAFT. The segment at 27–47 is disordered; that stretch reads APRLTGADRPMSEVAAPPLPE. The heme c site is built by histidine 68, cysteine 82, cysteine 85, histidine 86, histidine 103, cysteine 122, cysteine 125, and histidine 126.

It belongs to the NapB family. Component of the periplasmic nitrate reductase NapAB complex composed of NapA and NapB. Post-translationally, binds 2 heme C groups per subunit.

It is found in the periplasm. In terms of biological role, electron transfer subunit of the periplasmic nitrate reductase complex NapAB. Receives electrons from the membrane-anchored tetraheme c-type NapC protein and transfers these to NapA subunit, thus allowing electron flow between membrane and periplasm. Essential for periplasmic nitrate reduction with nitrate as the terminal electron acceptor. This Cereibacter sphaeroides (Rhodobacter sphaeroides) protein is Periplasmic nitrate reductase, electron transfer subunit.